A 1009-amino-acid chain; its full sequence is Epididymis-specific alpha-mannosidase (1009 aa).

The first 23 residues, Met-1 to Ser-23, serve as a signal peptide directing secretion. His-36, Asp-38, and Asp-151 together coordinate Zn(2+). The Nucleophile role is filled by Asp-151. Asn-226, Asn-249, Asn-294, and Asn-336 each carry an N-linked (GlcNAc...) asparagine glycan. Position 420 (His-420) interacts with Zn(2+). Residues Asn-516, Asn-608, Asn-670, Asn-675, Asn-748, Asn-808, Asn-812, and Asn-890 are each glycosylated (N-linked (GlcNAc...) asparagine). The tract at residues Gly-972–Ile-991 is disordered.

It belongs to the glycosyl hydrolase 38 family. It depends on Zn(2+) as a cofactor.

The protein localises to the secreted. The enzyme catalyses Hydrolysis of terminal, non-reducing alpha-D-mannose residues in alpha-D-mannosides.. The sequence is that of Epididymis-specific alpha-mannosidase (MAN2B2) from Homo sapiens (Human).